A 467-amino-acid chain; its full sequence is Cobyrinate a,c-diamide synthase (467 aa).

The region spanning 256–449 is the GATase cobBQ-type domain; the sequence is RVGYAADQAF…AHIHVEGAPE (194 aa). C338 (nucleophile) is an active-site residue.

The protein belongs to the CobB/CbiA family. It depends on Mg(2+) as a cofactor.

It catalyses the reaction cob(II)yrinate + 2 L-glutamine + 2 ATP + 2 H2O = cob(II)yrinate a,c diamide + 2 L-glutamate + 2 ADP + 2 phosphate + 2 H(+). It functions in the pathway cofactor biosynthesis; adenosylcobalamin biosynthesis; cob(II)yrinate a,c-diamide from sirohydrochlorin (anaerobic route): step 10/10. Functionally, catalyzes the ATP-dependent amidation of the two carboxylate groups at positions a and c of cobyrinate, using either L-glutamine or ammonia as the nitrogen source. In Magnetococcus marinus (strain ATCC BAA-1437 / JCM 17883 / MC-1), this protein is Cobyrinate a,c-diamide synthase.